A 163-amino-acid chain; its full sequence is Large ribosomal subunit protein uL11 (163 aa).

Belongs to the universal ribosomal protein uL11 family. Part of the ribosomal stalk of the 50S ribosomal subunit. Interacts with L10 and the large rRNA to form the base of the stalk. L10 forms an elongated spine to which L12 dimers bind in a sequential fashion forming a multimeric L10(L12)X complex.

Forms part of the ribosomal stalk which helps the ribosome interact with GTP-bound translation factors. This Thermococcus onnurineus (strain NA1) protein is Large ribosomal subunit protein uL11.